Here is a 155-residue protein sequence, read N- to C-terminus: Small ribosomal subunit protein uS7cz/uS7cy (155 aa).

The protein belongs to the universal ribosomal protein uS7 family. Part of the 30S ribosomal subunit.

The protein resides in the plastid. It localises to the chloroplast. Functionally, one of the primary rRNA binding proteins, it binds directly to 16S rRNA where it nucleates assembly of the head domain of the 30S subunit. The protein is Small ribosomal subunit protein uS7cz/uS7cy (rps7-A) of Psilotum nudum (Whisk fern).